The primary structure comprises 103 residues: NADH dehydrogenase [ubiquinone] 1 beta subcomplex subunit 7 (103 aa).

The CHCH domain maps to 27–69 (RDMCAHLLIPLNKCRQAEFYLPWKCEDERHVYEKCEYELVMER). Short sequence motifs (cx9C motif) lie at residues 30 to 40 (CAHLLIPLNKC) and 51 to 61 (CEDERHVYEKC). Intrachain disulfides connect cysteine 30/cysteine 61 and cysteine 40/cysteine 51.

This sequence belongs to the complex I NDUFB7 subunit family. Complex I is composed of at least 49 different subunits.

Its subcellular location is the mitochondrion. The protein localises to the mitochondrion inner membrane. The protein resides in the mitochondrion intermembrane space. Functionally, accessory subunit of the mitochondrial membrane respiratory chain NADH dehydrogenase (Complex I), that is believed not to be involved in catalysis. Complex I functions in the transfer of electrons from NADH to the respiratory chain. The immediate electron acceptor for the enzyme is believed to be ubiquinone. The chain is NADH dehydrogenase [ubiquinone] 1 beta subcomplex subunit 7 from Arabidopsis thaliana (Mouse-ear cress).